Consider the following 352-residue polypeptide: RNA 3'-terminal phosphate cyclase (352 aa).

ATP contacts are provided by residues glutamine 100 and 297–301 (HLADQ). The Tele-AMP-histidine intermediate role is filled by histidine 322.

Belongs to the RNA 3'-terminal cyclase family. Type 1 subfamily.

It localises to the cytoplasm. It carries out the reaction a 3'-end 3'-phospho-ribonucleotide-RNA + ATP = a 3'-end 2',3'-cyclophospho-ribonucleotide-RNA + AMP + diphosphate. Its function is as follows. Catalyzes the conversion of 3'-phosphate to a 2',3'-cyclic phosphodiester at the end of RNA. The mechanism of action of the enzyme occurs in 3 steps: (A) adenylation of the enzyme by ATP; (B) transfer of adenylate to an RNA-N3'P to produce RNA-N3'PP5'A; (C) and attack of the adjacent 2'-hydroxyl on the 3'-phosphorus in the diester linkage to produce the cyclic end product. The biological role of this enzyme is unknown but it is likely to function in some aspects of cellular RNA processing. The sequence is that of RNA 3'-terminal phosphate cyclase from Methanosarcina mazei (strain ATCC BAA-159 / DSM 3647 / Goe1 / Go1 / JCM 11833 / OCM 88) (Methanosarcina frisia).